Here is a 316-residue protein sequence, read N- to C-terminus: MLKVVLLMMIMMLASQSEAQLNRDFYKESCPSLFLVVRRVVKRAVAREPRMGASLLRLFFHDCFVNGCDGSLLLDDTPSFLGEKTSGPSNNSVRGFEVIDKIKFKVEKMCPGIVSCADILAITARDSVLLLGGPGWSVKLGRRDSTTANFAAANSGVIPPPITTLSNLINRFKAQGLSTRDMVALSGAHTIGRAQCVTFRNRIYNASNIDTSFAISKRRNCPATSGSGDNKKANLDVRSPDRFDHGFYKQLLSKKGLLTSDQVLFNNGPTDSLVIAYSHNLNAFYRDFARAMIKMGDISPLTGSNGQIRQNCRRPN.

The N-terminal stretch at 1–19 is a signal peptide; that stretch reads MLKVVLLMMIMMLASQSEA. Gln20 carries the pyrrolidone carboxylic acid modification. 4 disulfide bridges follow: Cys30-Cys110, Cys63-Cys68, Cys116-Cys312, and Cys196-Cys221. The active-site Proton acceptor is the His61. Residues Asp62, Val65, Gly67, Asp69, and Ser71 each contribute to the Ca(2+) site. A substrate-binding site is contributed by Pro159. Position 189 (His189) interacts with heme b. Position 190 (Thr190) interacts with Ca(2+). N-linked (GlcNAc...) asparagine glycosylation occurs at Asn205. Residues Asp236, Ser239, and Asp244 each contribute to the Ca(2+) site.

The protein belongs to the peroxidase family. Classical plant (class III) peroxidase subfamily. It depends on heme b as a cofactor. The cofactor is Ca(2+).

Its subcellular location is the secreted. The enzyme catalyses 2 a phenolic donor + H2O2 = 2 a phenolic radical donor + 2 H2O. Its function is as follows. Removal of H(2)O(2), oxidation of toxic reductants, biosynthesis and degradation of lignin, suberization, auxin catabolism, response to environmental stresses such as wounding, pathogen attack and oxidative stress. These functions might be dependent on each isozyme/isoform in each plant tissue. The chain is Peroxidase 67 (PER67) from Arabidopsis thaliana (Mouse-ear cress).